The primary structure comprises 161 residues: Peptidyl-prolyl cis-trans isomerase-like 1 (161 aa).

One can recognise a PPIase cyclophilin-type domain in the interval M1–V155.

The protein belongs to the cyclophilin-type PPIase family. PPIL1 subfamily.

It catalyses the reaction [protein]-peptidylproline (omega=180) = [protein]-peptidylproline (omega=0). Its function is as follows. PPIases accelerate the folding of proteins. It catalyzes the cis-trans isomerization of proline imidic peptide bonds in oligopeptides. The polypeptide is Peptidyl-prolyl cis-trans isomerase-like 1 (cyp1) (Aspergillus oryzae (strain ATCC 42149 / RIB 40) (Yellow koji mold)).